Here is a 463-residue protein sequence, read N- to C-terminus: Membrane-bound lytic murein transglycosylase F (463 aa).

Residues 1 to 33 (MQSQDYKKRLKLQIIIILSIAVMSCGVPNVPTA) form the signal peptide. The non-LT domain stretch occupies residues 34–272 (LSSLLERESI…VLEDKYFGHI (239 aa)). An LT domain region spans residues 273–463 (RQFDYVDSRA…LVWLDEQGKI (191 aa)). Glu317 is an active-site residue.

This sequence in the N-terminal section; belongs to the bacterial solute-binding protein 3 family. The protein in the C-terminal section; belongs to the transglycosylase Slt family.

Its subcellular location is the cell outer membrane. It carries out the reaction Exolytic cleavage of the (1-&gt;4)-beta-glycosidic linkage between N-acetylmuramic acid (MurNAc) and N-acetylglucosamine (GlcNAc) residues in peptidoglycan, from either the reducing or the non-reducing ends of the peptidoglycan chains, with concomitant formation of a 1,6-anhydrobond in the MurNAc residue.. Functionally, murein-degrading enzyme that degrades murein glycan strands and insoluble, high-molecular weight murein sacculi, with the concomitant formation of a 1,6-anhydromuramoyl product. Lytic transglycosylases (LTs) play an integral role in the metabolism of the peptidoglycan (PG) sacculus. Their lytic action creates space within the PG sacculus to allow for its expansion as well as for the insertion of various structures such as secretion systems and flagella. The polypeptide is Membrane-bound lytic murein transglycosylase F (Alteromonas mediterranea (strain DSM 17117 / CIP 110805 / LMG 28347 / Deep ecotype)).